The primary structure comprises 204 residues: Ribosomal RNA small subunit methyltransferase J (204 aa).

S-adenosyl-L-methionine is bound by residues 55–56 (RD), 71–72 (ER), and Asp-123.

Belongs to the methyltransferase superfamily. RsmJ family.

It is found in the cytoplasm. It catalyses the reaction guanosine(1516) in 16S rRNA + S-adenosyl-L-methionine = N(2)-methylguanosine(1516) in 16S rRNA + S-adenosyl-L-homocysteine + H(+). Specifically methylates the guanosine in position 1516 of 16S rRNA. This chain is Ribosomal RNA small subunit methyltransferase J, found in Rhodopseudomonas palustris (strain TIE-1).